Consider the following 92-residue polypeptide: MVRSVWKGPFVEGSLLKKADAARASGRHDVIKIWSRRSTILPQFVGLVFGVYNGQKHVPVSVNEEMVGHKFGEFSPTRTFHGHSGDKKAKRS.

Belongs to the universal ribosomal protein uS19 family.

Its function is as follows. Protein S19 forms a complex with S13 that binds strongly to the 16S ribosomal RNA. This Nitrobacter winogradskyi (strain ATCC 25391 / DSM 10237 / CIP 104748 / NCIMB 11846 / Nb-255) protein is Small ribosomal subunit protein uS19.